A 325-amino-acid chain; its full sequence is NADH-quinone oxidoreductase subunit H (325 aa).

The next 8 membrane-spanning stretches (helical) occupy residues 8–28 (VIDILLTVVKAVVILLVVVTC), 81–101 (GIFTLAPVIAFTSLLITFAIV), 114–134 (IGVLFFLMMAGLAVYAVLFAG), 159–179 (FLGLSLMGVVAQAGSFNLGAI), 186–206 (LWNVVPQFFGFVTFALAGVAV), 237–257 (FFVGEYVGIVTISALMVTLFF), 265–285 (LPPFIWFSIKTAFFMMMFILI), and 304–324 (ICLPLTLLNLLATAAVILYNA).

It belongs to the complex I subunit 1 family. In terms of assembly, NDH-1 is composed of 13 different subunits. Subunits NuoA, H, J, K, L, M, N constitute the membrane sector of the complex.

The protein resides in the cell inner membrane. The enzyme catalyses a quinone + NADH + 5 H(+)(in) = a quinol + NAD(+) + 4 H(+)(out). Its function is as follows. NDH-1 shuttles electrons from NADH, via FMN and iron-sulfur (Fe-S) centers, to quinones in the respiratory chain. The immediate electron acceptor for the enzyme in this species is believed to be ubiquinone. Couples the redox reaction to proton translocation (for every two electrons transferred, four hydrogen ions are translocated across the cytoplasmic membrane), and thus conserves the redox energy in a proton gradient. This subunit may bind ubiquinone. The protein is NADH-quinone oxidoreductase subunit H of Sodalis glossinidius (strain morsitans).